The primary structure comprises 493 residues: Probable cytosol aminopeptidase (493 aa).

2 residues coordinate Mn(2+): Lys265 and Asp270. Lys277 is an active-site residue. The Mn(2+) site is built by Asp288, Asp347, and Glu349. The active site involves Arg351.

Belongs to the peptidase M17 family. Mn(2+) serves as cofactor.

It is found in the cytoplasm. It carries out the reaction Release of an N-terminal amino acid, Xaa-|-Yaa-, in which Xaa is preferably Leu, but may be other amino acids including Pro although not Arg or Lys, and Yaa may be Pro. Amino acid amides and methyl esters are also readily hydrolyzed, but rates on arylamides are exceedingly low.. It catalyses the reaction Release of an N-terminal amino acid, preferentially leucine, but not glutamic or aspartic acids.. Presumably involved in the processing and regular turnover of intracellular proteins. Catalyzes the removal of unsubstituted N-terminal amino acids from various peptides. This is Probable cytosol aminopeptidase from Hydrogenovibrio crunogenus (strain DSM 25203 / XCL-2) (Thiomicrospira crunogena).